Reading from the N-terminus, the 218-residue chain is MQPKLVLENTIYTLEQLVSFNAPQIALAGRSNVGKSSLVNTLAGRKGLARTSSTPGKTRSINFYKVDPDGYYVVDLPGYGYARCSKAEREKWAKLIRRYLVETPAVCAIAILLDCRLSPQKLDVELAAFARQAGLPLLPVLTKADKCKQQERALRQREWRTILGGEVPLLFSSKTGMGKDKLWQELHRLAFPDMAFDTPSDGAPEPADEPEAASERAE.

In terms of domain architecture, EngB-type G spans 21–192; sequence NAPQIALAGR…WQELHRLAFP (172 aa). GTP-binding positions include 29–36, 56–60, 75–78, 142–145, and 171–173; these read GRSNVGKS, GKTRS, DLPG, TKAD, and FSS. Mg(2+) contacts are provided by S36 and T58. The tract at residues 194–218 is disordered; it reads MAFDTPSDGAPEPADEPEAASERAE.

The protein belongs to the TRAFAC class TrmE-Era-EngA-EngB-Septin-like GTPase superfamily. EngB GTPase family. The cofactor is Mg(2+).

Its function is as follows. Necessary for normal cell division and for the maintenance of normal septation. In Oleidesulfovibrio alaskensis (strain ATCC BAA-1058 / DSM 17464 / G20) (Desulfovibrio alaskensis), this protein is Probable GTP-binding protein EngB.